The primary structure comprises 331 residues: MARMYYDADANLDLLNGKTVAIIGYGSQGHAHALNLKDSGINVVIGLYAGSKSTAKAEAEGLKVLPVAEAAKVADWIMILLPDDVQKSVYTKDILPNLQAGNVLSFAHGFNINFGQIVPPADVDVVMVAPKGPGHLVRRTYEQGQGVPALFAVYQDATGQARDLAMAYAKGIGGTRGGILETTFREETETDLFGEQAVLCGGLSALIKAGFETLVEAGYQPELAYFECLHEVKLIVDLVVEGGLAKMRDSISTTAEYGDYVSGPRVITAETKAAMKEILTEIQTGEFARNFILENQSGQAQFTAIRRREAEHPIEVVGKDLRAMFSWLKES.

Residues 2–182 enclose the KARI N-terminal Rossmann domain; sequence ARMYYDADAN…GGTRGGILET (181 aa). NADP(+)-binding positions include 25–28, Ser-51, Ser-53, and 83–86; these read YGSQ and DDVQ. His-108 is an active-site residue. Gly-134 contributes to the NADP(+) binding site. The 146-residue stretch at 183–328 folds into the KARI C-terminal knotted domain; that stretch reads TFREETETDL…KDLRAMFSWL (146 aa). The Mg(2+) site is built by Asp-191, Glu-195, Glu-227, and Glu-231. Residue Ser-252 participates in substrate binding.

This sequence belongs to the ketol-acid reductoisomerase family. Mg(2+) serves as cofactor.

The catalysed reaction is (2R)-2,3-dihydroxy-3-methylbutanoate + NADP(+) = (2S)-2-acetolactate + NADPH + H(+). It catalyses the reaction (2R,3R)-2,3-dihydroxy-3-methylpentanoate + NADP(+) = (S)-2-ethyl-2-hydroxy-3-oxobutanoate + NADPH + H(+). The protein operates within amino-acid biosynthesis; L-isoleucine biosynthesis; L-isoleucine from 2-oxobutanoate: step 2/4. It participates in amino-acid biosynthesis; L-valine biosynthesis; L-valine from pyruvate: step 2/4. In terms of biological role, involved in the biosynthesis of branched-chain amino acids (BCAA). Catalyzes an alkyl-migration followed by a ketol-acid reduction of (S)-2-acetolactate (S2AL) to yield (R)-2,3-dihydroxy-isovalerate. In the isomerase reaction, S2AL is rearranged via a Mg-dependent methyl migration to produce 3-hydroxy-3-methyl-2-ketobutyrate (HMKB). In the reductase reaction, this 2-ketoacid undergoes a metal-dependent reduction by NADPH to yield (R)-2,3-dihydroxy-isovalerate. This Picosynechococcus sp. (strain ATCC 27264 / PCC 7002 / PR-6) (Agmenellum quadruplicatum) protein is Ketol-acid reductoisomerase (NADP(+)).